The chain runs to 175 residues: tRNA (cytidine(56)-2'-O)-methyltransferase (175 aa).

Leucine 83 contacts S-adenosyl-L-methionine.

Belongs to the aTrm56 family. Homodimer.

It is found in the cytoplasm. The enzyme catalyses cytidine(56) in tRNA + S-adenosyl-L-methionine = 2'-O-methylcytidine(56) in tRNA + S-adenosyl-L-homocysteine + H(+). Specifically catalyzes the AdoMet-dependent 2'-O-ribose methylation of cytidine at position 56 in tRNAs. The protein is tRNA (cytidine(56)-2'-O)-methyltransferase of Methanosphaera stadtmanae (strain ATCC 43021 / DSM 3091 / JCM 11832 / MCB-3).